A 337-amino-acid polypeptide reads, in one-letter code: Neurogenic differentiation factor 6 (337 aa).

Residues 43–82 are disordered; that stretch reads LRGKSIKRAPGEETEKEEEEEDREEEDENGLPRRRGLRKK. The span at 54-71 shows a compositional bias: acidic residues; sequence EETEKEEEEEDREEEDEN. The short motif at 80–86 is the Nuclear localization signal element; the sequence is RKKKTTK. Positions 94–146 constitute a bHLH domain; sequence FRRQEANARERNRMHGLNDALDNLRKVVPCYSKTQKLSKIETLRLAKNYIWAL.

Efficient DNA binding requires dimerization with another bHLH protein.

The protein resides in the nucleus. Activates E box-dependent transcription in collaboration with TCF3/E47. May be a trans-acting factor involved in the development and maintenance of the mammalian nervous system. Transactivates the promoter of its own gene. This is Neurogenic differentiation factor 6 (NEUROD6) from Homo sapiens (Human).